A 229-amino-acid polypeptide reads, in one-letter code: Large ribosomal subunit protein uL1 (229 aa).

Belongs to the universal ribosomal protein uL1 family. As to quaternary structure, part of the 50S ribosomal subunit.

Binds directly to 23S rRNA. The L1 stalk is quite mobile in the ribosome, and is involved in E site tRNA release. Functionally, protein L1 is also a translational repressor protein, it controls the translation of the L11 operon by binding to its mRNA. This is Large ribosomal subunit protein uL1 from Pasteurella multocida (strain Pm70).